Here is a 635-residue protein sequence, read N- to C-terminus: MEEKPNYVIQVEEELPTLLRKATTEEMVGFDNYKENGHPFPHSISRFHPSHASTTTLNGQETSRSIDTMEAHHHNYNETTPWTHQRKPSISMPTSPNVLMISDPTTSLSSENHKNSGSTGKSVKFLSQPMTKVSSLYIESGNGDDDRRQSHDNHHHHLHRQHQSGHHQNQNQAANKLKDNRYNSFKTWSGKLERQFTRKPASVEPEAPNRNNQNLNTNEAMPVDRYYDALEGPELETLRPQEEIVLPNDKKWPFLLRYPISTFGMCLGVSSQAIMWKTLATAEPTKFLHVPLWINQGLWFISVALILTIATIYLLKIILFFEAVRREYYHPIRINFFFAPFISLLFLALGVPPSIITDLPHFLWYLLMFPFICLELKIYGQWMSGGQRRLSRVANPTNHLSVVGNFVGALLGASMGLREGPIFFYAVGMAHYLVLFVTLYQRLPTNETLPKDLHPVFFLFVAAPSVASMAWAKVTGSFDYGSKVCYFIAIFLYFSLAVRINFFRGIKFSLSWWAYTFPMTGAAIATIRYATVVKSTMTQIMCVVLCAIATLVVFALLVTTIIHAFVLRDLFPNDLAIAISNRPRPKQNSQHRWLDQLRNVSSENIENYLKFTDSDSSQSNDVEACNGKTQESDSS.

At 1-253 (MEEKPNYVIQ…IVLPNDKKWP (253 aa)) the chain is on the cytoplasmic side. The segment covering 102–121 (SDPTTSLSSENHKNSGSTGK) has biased composition (polar residues). A disordered region spans residues 102 to 173 (SDPTTSLSSE…SGHHQNQNQA (72 aa)). Over residues 153–165 (NHHHHLHRQHQSG) the composition is skewed to basic residues. The residue at position 189 (serine 189) is a Phosphoserine. Residues 193-217 (ERQFTRKPASVEPEAPNRNNQNLNT) form a disordered region. A helical transmembrane segment spans residues 254-276 (FLLRYPISTFGMCLGVSSQAIMW). Residues 277 to 299 (KTLATAEPTKFLHVPLWINQGLW) are Extracellular-facing. Residues 300-320 (FISVALILTIATIYLLKIILF) form a helical membrane-spanning segment. Residues 321-335 (FEAVRREYYHPIRIN) are Cytoplasmic-facing. A helical transmembrane segment spans residues 336 to 356 (FFFAPFISLLFLALGVPPSII). Residues 357 to 358 (TD) are Extracellular-facing. Residues 359-379 (LPHFLWYLLMFPFICLELKIY) form a helical membrane-spanning segment. Residues 380–396 (GQWMSGGQRRLSRVANP) lie on the Cytoplasmic side of the membrane. A helical transmembrane segment spans residues 397 to 417 (TNHLSVVGNFVGALLGASMGL). At 418–419 (RE) the chain is on the extracellular side. A helical transmembrane segment spans residues 420-440 (GPIFFYAVGMAHYLVLFVTLY). Residues 441-455 (QRLPTNETLPKDLHP) are Cytoplasmic-facing. The chain crosses the membrane as a helical span at residues 456 to 476 (VFFLFVAAPSVASMAWAKVTG). Residue serine 477 is a topological domain, extracellular. A helical transmembrane segment spans residues 478 to 498 (FDYGSKVCYFIAIFLYFSLAV). The Cytoplasmic portion of the chain corresponds to 499–504 (RINFFR). The chain crosses the membrane as a helical span at residues 505–525 (GIKFSLSWWAYTFPMTGAAIA). Residues 526-541 (TIRYATVVKSTMTQIM) lie on the Extracellular side of the membrane. Residues 542 to 562 (CVVLCAIATLVVFALLVTTII) form a helical membrane-spanning segment. Residues 563-635 (HAFVLRDLFP…NGKTQESDSS (73 aa)) are Cytoplasmic-facing. Residues 611–635 (FTDSDSSQSNDVEACNGKTQESDSS) are disordered. Over residues 614 to 635 (SDSSQSNDVEACNGKTQESDSS) the composition is skewed to polar residues.

The protein belongs to the SLAC1 S-type anion channel family. As to quaternary structure, homotrimer. Interacts with KAT1. As to expression, expressed in the whole plant, escpecially in vascular systems.

Its subcellular location is the cell membrane. Slow, weak voltage-dependent S-type anion efflux channel involved in maintenance of anion homeostasis. Binds to the highly selective inward-rectifying potassium channel KAT1 and inhibits its activity. Functions as an essential negative regulator of inward potassium channels in guard cells. Essential for the efficient stomatal closure and opening in guard cells. This chain is S-type anion channel SLAH3 (SLAH3), found in Arabidopsis thaliana (Mouse-ear cress).